A 438-amino-acid polypeptide reads, in one-letter code: UDP-N-acetylmuramoylalanine--D-glutamate ligase (438 aa).

112 to 118 (GSNGKST) serves as a coordination point for ATP.

This sequence belongs to the MurCDEF family.

It localises to the cytoplasm. It catalyses the reaction UDP-N-acetyl-alpha-D-muramoyl-L-alanine + D-glutamate + ATP = UDP-N-acetyl-alpha-D-muramoyl-L-alanyl-D-glutamate + ADP + phosphate + H(+). The protein operates within cell wall biogenesis; peptidoglycan biosynthesis. Functionally, cell wall formation. Catalyzes the addition of glutamate to the nucleotide precursor UDP-N-acetylmuramoyl-L-alanine (UMA). This Yersinia pestis bv. Antiqua (strain Antiqua) protein is UDP-N-acetylmuramoylalanine--D-glutamate ligase.